Reading from the N-terminus, the 351-residue chain is Photosystem II D2 protein (351 aa).

Residues 39 to 59 form a helical membrane-spanning segment; the sequence is CAYMAIGGWLTGTTFATSWYT. Histidine 116 is a chlorophyll a binding site. The chain crosses the membrane as a helical span at residues 123–139; it reads GFMLRQFEIARLVGVRP. The pheophytin a site is built by glutamine 128 and asparagine 141. A helical transmembrane segment spans residues 151-164; it reads LFVSVFLIYPLGQS. Chlorophyll a is bound at residue histidine 196. A helical transmembrane segment spans residues 206-226; the sequence is GALLCAIHGATVENTLFEDGD. Positions 213 and 260 each coordinate a plastoquinone. Histidine 213 contacts Fe cation. Histidine 267 provides a ligand contact to Fe cation. The chain crosses the membrane as a helical span at residues 277–293; sequence GLWMSAIGVVGLALNLR.

This sequence belongs to the reaction center PufL/M/PsbA/D family. PSII is composed of 1 copy each of membrane proteins PsbA, PsbB, PsbC, PsbD, PsbE, PsbF, PsbH, PsbI, PsbJ, PsbK, PsbL, PsbM, PsbT, PsbX, PsbY, PsbZ, Psb30/Ycf12, peripheral proteins PsbO, CyanoQ (PsbQ), PsbU, PsbV and a large number of cofactors. It forms dimeric complexes. The cofactor is The D1/D2 heterodimer binds P680, chlorophylls that are the primary electron donor of PSII, and subsequent electron acceptors. It shares a non-heme iron and each subunit binds pheophytin, quinone, additional chlorophylls, carotenoids and lipids. There is also a Cl(-1) ion associated with D1 and D2, which is required for oxygen evolution. The PSII complex binds additional chlorophylls, carotenoids and specific lipids..

It localises to the cellular thylakoid membrane. It carries out the reaction 2 a plastoquinone + 4 hnu + 2 H2O = 2 a plastoquinol + O2. In terms of biological role, photosystem II (PSII) is a light-driven water:plastoquinone oxidoreductase that uses light energy to abstract electrons from H(2)O, generating O(2) and a proton gradient subsequently used for ATP formation. It consists of a core antenna complex that captures photons, and an electron transfer chain that converts photonic excitation into a charge separation. The D1/D2 (PsbA/PsbD) reaction center heterodimer binds P680, the primary electron donor of PSII as well as several subsequent electron acceptors. D2 is needed for assembly of a stable PSII complex. The chain is Photosystem II D2 protein from Prochlorothrix hollandica.